The following is a 265-amino-acid chain: RNA-binding protein 7 (265 aa).

An N-acetylglycine modification is found at glycine 2. The RRM domain maps to 10-87 (RTLFVGNLET…RPIKIQFRSG (78 aa)). 2 ZCCHC8 binding regions span residues 25–35 (LLFELFHQAGP) and 59–76 (HEVSVPYAMNLLNGIKLF). The interval 91 to 125 (ASQDASVSYPQHHVGNLSPTSTSPNSYERTVGNVS) is disordered. A compositionally biased stretch (polar residues) spans 107-125 (LSPTSTSPNSYERTVGNVS). Serine 136 is modified (phosphoserine; by MAPKAPK2). Serine 137 is subject to Phosphoserine. Arginine 152 is modified (omega-N-methylarginine). Disordered stretches follow at residues 166–224 (DQLG…HGSD) and 237–265 (DDRNHDGWSHDYDNRRDSSRGGKWPSSRH). A compositionally biased stretch (polar residues) spans 170–196 (FSPSAQPHGHTFNQSSSSQWRQDALSS). At serine 203 the chain carries Phosphoserine. Basic and acidic residues-rich tracts occupy residues 207–224 (LADRHYSREQRYSDHGSD) and 237–256 (DDRNHDGWSHDYDNRRDSSR).

In terms of assembly, component of the nuclear exosome targeting (NEXT) complex composed of MTREX, ZCCHC8, and RBM7 that directs a subset of non-coding short-lived RNAs for exosomal degradation. Interacts with ZCCHC8 and SF3B2/SAP145. Binds to MTREX through ZCCHC8. Interacts with YWHAE and YWHAZ; these interactions are stress-dependent and RBM7 phosphorylation dependent; release RNA from the NEXT complex and may affect RNA targeting to the nuclear RNA exosomome for degradation. Interacts with MEPCE and LARP7, the core subunits of 7SK snRNP; upon genotoxic stress this interaction is enhanced, triggering the release of inactive P-TEFb complex from the core and P-TEFb complex activation. Phosphorylated at Ser-136 by MAPK14/p38-alpha-activated MAPKAPK2/MK2; this phosphorylation is stress-dependent; this phosphorylation decreases its RNA-binding capacity therefore affecting RNA nuclear exosome-mediated degradation. This phosphorylation mediates YWHAE and YWHAZ interactions.

Its subcellular location is the nucleus. The protein resides in the nucleoplasm. Functionally, RNA-binding subunit of the trimeric nuclear exosome targeting (NEXT) complex, a complex that functions as an RNA exosome cofactor that directs a subset of non-coding short-lived RNAs for exosomal degradation. NEXT is involved in surveillance and turnover of aberrant transcripts and non-coding RNAs. Binds preferentially polyuridine sequences and associates with newly synthesized RNAs, including pre-mRNAs and short-lived exosome substrates such as promoter upstream transcripts (PROMPTs), enhancer RNAs (eRNAs), and 3'-extended products from small nuclear RNAs (snRNAs). Participates in several biological processes including DNA damage response (DDR) and stress response. During stress response, activation of the p38MAPK-MK2 pathway decreases RBM7-RNA-binding and subsequently the RNA exosome degradation activities, thereby modulating the turnover of non-coding transcriptome. Participates in DNA damage response (DDR), through its interaction with MEPCE and LARP7, the core subunits of 7SK snRNP complex, that release the positive transcription elongation factor b (P-TEFb) complex from the 7SK snRNP. In turn, activation of P-TEFb complex induces the transcription of P-TEFb-dependent DDR genes to promote cell viability. The polypeptide is RNA-binding protein 7 (Mus musculus (Mouse)).